Reading from the N-terminus, the 262-residue chain is 14-3-3 protein epsilon (262 aa).

A disordered region spans residues 236–262 (QAEEVDPNAGDGEPKEQIQDVEDQDVS). Ser262 carries the post-translational modification Phosphoserine.

Belongs to the 14-3-3 family. In terms of assembly, homodimer. Interacts with phosphorylated yki. Interacts with pav (when serine phosphorylated); the interaction is necessary for association of the complex pav-14-3-3epsilon complex to the microtubules, thereby inhibiting microtubule sliding.

Positively regulates Ras-mediated pathways. Acts downstream or parallel to Raf, but upstream of nuclear factors in Ras signaling. Three mutants have been isolated, that suppress the rough eye phenotype caused by mutated Ras1 (sev-Ras1 v12). Inhibits yki activity by restricting its nuclear localization. Together with pav, has a role in the inhibition of microtubule sliding during neurite outgrowth. The sequence is that of 14-3-3 protein epsilon (14-3-3epsilon) from Drosophila melanogaster (Fruit fly).